The primary structure comprises 371 residues: Transcription factor bHLH77 (371 aa).

3 disordered regions span residues 1–25, 65–206, and 352–371; these read MNMDKETEQTLNYLPLGQSDPFGNG, SGGI…SLAE, and QSNNNNNNCSEPTLQMKLEP. Residues 85 to 96 are compositionally biased toward polar residues; it reads SQPTTQESNKSS. The segment covering 128 to 142 has biased composition (low complexity); sequence SPASSSLTASNSKVS. Over residues 165-190 the composition is skewed to basic and acidic residues; that stretch reads GVEKCDSKGDNKDDAKPPEAPKDYIH. A bHLH domain is found at 197-247; the sequence is QATDSHSLAERARREKISERMTLLQDLVPGCNRITGKAVMLDEIINYVQSL.

Homodimer. Interacts with IBH1. As to expression, expressed constitutively in roots, leaves, stems, and flowers.

The protein resides in the nucleus. This chain is Transcription factor bHLH77 (BHLH77), found in Arabidopsis thaliana (Mouse-ear cress).